The sequence spans 273 residues: Cell division protein ZipA (273 aa).

Position 1 (Met-1) is a topological domain, periplasmic. Residues 2–22 (EFGLREWLIVIGIIVIAGILF) form a helical membrane-spanning segment. Topologically, residues 23–273 (DGWRRMRGGK…FERRQLTQKR (251 aa)) are cytoplasmic. The segment at 65–125 (EMEPQLDEDD…QEPKKSAKLS (61 aa)) is disordered. Residues 111–120 (VDDKPQEPKK) show a composition bias toward basic and acidic residues.

This sequence belongs to the ZipA family. In terms of assembly, interacts with FtsZ via their C-terminal domains.

It localises to the cell inner membrane. Its function is as follows. Essential cell division protein that stabilizes the FtsZ protofilaments by cross-linking them and that serves as a cytoplasmic membrane anchor for the Z ring. Also required for the recruitment to the septal ring of downstream cell division proteins. This chain is Cell division protein ZipA, found in Ectopseudomonas mendocina (strain ymp) (Pseudomonas mendocina).